The sequence spans 256 residues: Triosephosphate isomerase (256 aa).

9–11 (NWK) is a substrate binding site. Histidine 97 (electrophile) is an active-site residue. Glutamate 169 serves as the catalytic Proton acceptor. Substrate contacts are provided by residues glycine 175, serine 214, and 235–236 (GG).

This sequence belongs to the triosephosphate isomerase family. Homodimer.

It is found in the cytoplasm. It catalyses the reaction D-glyceraldehyde 3-phosphate = dihydroxyacetone phosphate. The protein operates within carbohydrate biosynthesis; gluconeogenesis. It participates in carbohydrate degradation; glycolysis; D-glyceraldehyde 3-phosphate from glycerone phosphate: step 1/1. Involved in the gluconeogenesis. Catalyzes stereospecifically the conversion of dihydroxyacetone phosphate (DHAP) to D-glyceraldehyde-3-phosphate (G3P). The polypeptide is Triosephosphate isomerase (Vibrio vulnificus (strain CMCP6)).